A 103-amino-acid chain; its full sequence is Large ribosomal subunit protein bL21 (103 aa).

Belongs to the bacterial ribosomal protein bL21 family. In terms of assembly, part of the 50S ribosomal subunit. Contacts protein L20.

This protein binds to 23S rRNA in the presence of protein L20. This chain is Large ribosomal subunit protein bL21, found in Shewanella denitrificans (strain OS217 / ATCC BAA-1090 / DSM 15013).